A 1050-amino-acid polypeptide reads, in one-letter code: Antibiotic efflux pump membrane transporter ArpB (1050 aa).

The next 12 helical transmembrane spans lie at 10–30, 339–359, 370–390, 393–413, 440–460, 472–492, 539–559, 871–891, 893–913, 923–943, 972–992, and 1004–1024; these read IFAW…ILKL, GVIH…YLFL, MTVP…GFSI, LTMF…IVVV, GALV…AFFG, ITIV…TPAL, VPFL…FARI, MPAL…ALYE, WSIP…ALIA, VYFL…AILI, IIMT…ASGA, and VIGG…LFFV.

Belongs to the resistance-nodulation-cell division (RND) (TC 2.A.6) family.

It is found in the cell inner membrane. The inner membrane transporter component of an antibiotic efflux pump. Confers resistance to numerous structurally unrelated antibiotics such as carbenicillin, chloramphenicol, erythromycin, novobiocin, streptomycin and tetracycline. Is not involved in organic solvent efflux. This Pseudomonas putida (Arthrobacter siderocapsulatus) protein is Antibiotic efflux pump membrane transporter ArpB (arpB).